Consider the following 434-residue polypeptide: Mitochondrial distribution and morphology protein 12 (434 aa).

Residues methionine 1 to valine 434 enclose the SMP-LTD domain. A compositionally biased stretch (acidic residues) spans tyrosine 70–glutamate 83. Disordered regions lie at residues tyrosine 70–proline 141 and threonine 181–arginine 277. Residues serine 86–serine 97 show a composition bias toward basic and acidic residues. Residues serine 215–serine 237 are compositionally biased toward polar residues.

Belongs to the MDM12 family. Component of the ER-mitochondria encounter structure (ERMES) or MDM complex, composed of MMM1, MDM10, MDM12 and MDM34. An MMM1 homodimer associates with one molecule of MDM12 on each side in a pairwise head-to-tail manner, and the SMP-LTD domains of MMM1 and MDM12 generate a continuous hydrophobic tunnel for phospholipid trafficking.

It is found in the mitochondrion outer membrane. Its subcellular location is the endoplasmic reticulum membrane. In terms of biological role, component of the ERMES/MDM complex, which serves as a molecular tether to connect the endoplasmic reticulum (ER) and mitochondria. Components of this complex are involved in the control of mitochondrial shape and protein biogenesis, and function in nonvesicular lipid trafficking between the ER and mitochondria. MDM12 is required for the interaction of the ER-resident membrane protein MMM1 and the outer mitochondrial membrane-resident beta-barrel protein MDM10. The MDM12-MMM1 subcomplex functions in the major beta-barrel assembly pathway that is responsible for biogenesis of all mitochondrial outer membrane beta-barrel proteins, and acts in a late step after the SAM complex. The MDM10-MDM12-MMM1 subcomplex further acts in the TOM40-specific pathway after the action of the MDM12-MMM1 complex. Essential for establishing and maintaining the structure of mitochondria and maintenance of mtDNA nucleoids. The protein is Mitochondrial distribution and morphology protein 12 of Ajellomyces dermatitidis (strain ER-3 / ATCC MYA-2586) (Blastomyces dermatitidis).